Consider the following 471-residue polypeptide: UDP-N-acetylmuramoylalanine--D-glutamate ligase (471 aa).

An ATP-binding site is contributed by 122-128 (GSNAKST).

This sequence belongs to the MurCDEF family.

The protein localises to the cytoplasm. It carries out the reaction UDP-N-acetyl-alpha-D-muramoyl-L-alanine + D-glutamate + ATP = UDP-N-acetyl-alpha-D-muramoyl-L-alanyl-D-glutamate + ADP + phosphate + H(+). Its pathway is cell wall biogenesis; peptidoglycan biosynthesis. Its function is as follows. Cell wall formation. Catalyzes the addition of glutamate to the nucleotide precursor UDP-N-acetylmuramoyl-L-alanine (UMA). The protein is UDP-N-acetylmuramoylalanine--D-glutamate ligase of Psychrobacter cryohalolentis (strain ATCC BAA-1226 / DSM 17306 / VKM B-2378 / K5).